Consider the following 385-residue polypeptide: GDP-D-glucose phosphorylase 1 (385 aa).

Histidine 218 (tele-GMP-histidine intermediate) is an active-site residue.

This sequence belongs to the GDPGP1 family.

It localises to the cytoplasm. It catalyses the reaction GDP-alpha-D-glucose + phosphate = alpha-D-glucose 1-phosphate + GDP + H(+). Specific and highly efficient GDP-D-glucose phosphorylase regulating the levels of GDP-D-glucose in cells. In Macaca fascicularis (Crab-eating macaque), this protein is GDP-D-glucose phosphorylase 1 (GDPGP1).